The chain runs to 176 residues: Avian agnoprotein 1a (176 aa).

Disordered regions lie at residues 1–85 (MSTP…GKLE) and 116–176 (VYAA…RPAR). Residues 75 to 85 (YDRQNRFGKLE) are compositionally biased toward basic and acidic residues. A coiled-coil region spans residues 76-119 (DRQNRFGKLESEIRETKSQLETLRQELKHLQADVDDLKETVYAA). Residues 137 to 161 (TPTATTPEASPAAPTTESTETTGPS) are compositionally biased toward low complexity.

As to quaternary structure, interacts with VP1.

The protein localises to the virion. It localises to the host nucleus. The protein is Avian agnoprotein 1a of Budgerigar fledgling disease virus (BFPyV).